A 699-amino-acid chain; its full sequence is Transketolase (699 aa).

His45 contributes to the substrate binding site. Thiamine diphosphate is bound by residues Thr48, His85, and 133–135 (GPL). Asp177 lines the Mg(2+) pocket. 2 residues coordinate thiamine diphosphate: Gly178 and Asn207. 2 residues coordinate Mg(2+): Asn207 and Ile209. 3 residues coordinate substrate: His283, Arg378, and Ser405. Position 283 (His283) interacts with thiamine diphosphate. The active-site Proton donor is the Glu441. Residue Phe467 participates in thiamine diphosphate binding. Substrate contacts are provided by His491, Asp499, and Arg552.

The protein belongs to the transketolase family. As to quaternary structure, homodimer. Mg(2+) is required as a cofactor. Requires Ca(2+) as cofactor. It depends on Mn(2+) as a cofactor. Co(2+) serves as cofactor. The cofactor is thiamine diphosphate.

The catalysed reaction is D-sedoheptulose 7-phosphate + D-glyceraldehyde 3-phosphate = aldehydo-D-ribose 5-phosphate + D-xylulose 5-phosphate. In terms of biological role, catalyzes the transfer of a two-carbon ketol group from a ketose donor to an aldose acceptor, via a covalent intermediate with the cofactor thiamine pyrophosphate. The protein is Transketolase (tkt) of Mycobacterium leprae (strain TN).